The primary structure comprises 460 residues: NADH-ubiquinone oxidoreductase chain 4 (460 aa).

The next 13 membrane-spanning stretches (helical) occupy residues 22–42, 61–81, 94–113, 117–139, 148–168, 195–217, 225–245, 258–278, 285–304, 308–330, 351–371, 394–414, and 436–456; these read WLWPTALTQSMLIALGSITWL, PLSTPLLVLSCWLLPLMLLAS, RMYITLLATLQLFLILAFGA, IMFYVMFEATLIPTLLVITRWGN, TYFLFYTLAGSLPLLVALLML, IWWAACMIAFLVKMPLYGMHLWL, PVAGSMVLAAVLLKLGGYGMM, MVYPFIVLALWGVIITGSICL, SLIAYSSVSHMGLVAGGILI, WGFTGALILMIAHGLASSALFCL, IALPLMTTWWFIASLANLALP, LILTGIGTLITAAYSLYMFLM, and LLMALHLIPLLLIILKPALLW.

It belongs to the complex I subunit 4 family.

The protein localises to the mitochondrion membrane. It carries out the reaction a ubiquinone + NADH + 5 H(+)(in) = a ubiquinol + NAD(+) + 4 H(+)(out). Its function is as follows. Core subunit of the mitochondrial membrane respiratory chain NADH dehydrogenase (Complex I) that is believed to belong to the minimal assembly required for catalysis. Complex I functions in the transfer of electrons from NADH to the respiratory chain. The immediate electron acceptor for the enzyme is believed to be ubiquinone. The sequence is that of NADH-ubiquinone oxidoreductase chain 4 (MT-ND4) from Gadus morhua (Atlantic cod).